Reading from the N-terminus, the 190-residue chain is MKINGNEIRPGNVIEHQGSLWVAVKCNAVKPGKGGAFNQVELKNVIDGTKLNERFRAAETVEKVRLEQKDFTFLYQQGEALVFMDTESYEQLELQRDFVGDRAAFLQDGMTVTVELHEEKPLGISLPDQVTVTIAEADPAIKGQTVTSSYKPAILENGIRILVPPFVQAGERIIVDTNELTYIRRVSEKG.

The protein belongs to the elongation factor P family.

Its subcellular location is the cytoplasm. It participates in protein biosynthesis; polypeptide chain elongation. Functionally, involved in peptide bond synthesis. Stimulates efficient translation and peptide-bond synthesis on native or reconstituted 70S ribosomes in vitro. Probably functions indirectly by altering the affinity of the ribosome for aminoacyl-tRNA, thus increasing their reactivity as acceptors for peptidyl transferase. In Bartonella bacilliformis (strain ATCC 35685 / KC583 / Herrer 020/F12,63), this protein is Elongation factor P.